Consider the following 438-residue polypeptide: UDP-N-acetylmuramate--L-alanine ligase (438 aa).

108 to 114 is a binding site for ATP; it reads GAHGKTS.

It belongs to the MurCDEF family.

It is found in the cytoplasm. The catalysed reaction is UDP-N-acetyl-alpha-D-muramate + L-alanine + ATP = UDP-N-acetyl-alpha-D-muramoyl-L-alanine + ADP + phosphate + H(+). Its pathway is cell wall biogenesis; peptidoglycan biosynthesis. Cell wall formation. This is UDP-N-acetylmuramate--L-alanine ligase from Oceanobacillus iheyensis (strain DSM 14371 / CIP 107618 / JCM 11309 / KCTC 3954 / HTE831).